We begin with the raw amino-acid sequence, 293 residues long: Putative DNA glycosylase At3g47830 (293 aa).

Over residues 1–10 (MSKAQKRKRL) the composition is skewed to basic residues. Residues 1–34 (MSKAQKRKRLNKYDGESKTPANKSTVDGGNPYPT) are disordered. Residues Asn-108 and Lys-151 each contribute to the DNA site. The Schiff-base intermediate with DNA role is filled by Lys-196. 2 residues coordinate DNA: His-216 and Asp-232.

The protein belongs to the DNA glycosylase family.

The chain is Putative DNA glycosylase At3g47830 from Arabidopsis thaliana (Mouse-ear cress).